We begin with the raw amino-acid sequence, 337 residues long: Holliday junction branch migration complex subunit RuvB (337 aa).

The segment at 4 to 186 is large ATPase domain (RuvB-L); sequence ADRLIAADNP…FGIVQRLEYY (183 aa). Residues Ile-25, Arg-26, Gly-67, Lys-70, Thr-71, Thr-72, 133–135, Arg-176, Tyr-186, and Arg-223 each bind ATP; that span reads EDY. Thr-71 lines the Mg(2+) pocket. Residues 187 to 257 form a small ATPAse domain (RuvB-S) region; sequence KVEDLQHIVQ…IADKALNMLD (71 aa). The head domain (RuvB-H) stretch occupies residues 260 to 337; that stretch reads VRGFDYMDRK…LHFGIDKPDK (78 aa). Arg-296, Arg-315, and Arg-320 together coordinate DNA.

It belongs to the RuvB family. In terms of assembly, homohexamer. Forms an RuvA(8)-RuvB(12)-Holliday junction (HJ) complex. HJ DNA is sandwiched between 2 RuvA tetramers; dsDNA enters through RuvA and exits via RuvB. An RuvB hexamer assembles on each DNA strand where it exits the tetramer. Each RuvB hexamer is contacted by two RuvA subunits (via domain III) on 2 adjacent RuvB subunits; this complex drives branch migration. In the full resolvosome a probable DNA-RuvA(4)-RuvB(12)-RuvC(2) complex forms which resolves the HJ.

It localises to the cytoplasm. The catalysed reaction is ATP + H2O = ADP + phosphate + H(+). Functionally, the RuvA-RuvB-RuvC complex processes Holliday junction (HJ) DNA during genetic recombination and DNA repair, while the RuvA-RuvB complex plays an important role in the rescue of blocked DNA replication forks via replication fork reversal (RFR). RuvA specifically binds to HJ cruciform DNA, conferring on it an open structure. The RuvB hexamer acts as an ATP-dependent pump, pulling dsDNA into and through the RuvAB complex. RuvB forms 2 homohexamers on either side of HJ DNA bound by 1 or 2 RuvA tetramers; 4 subunits per hexamer contact DNA at a time. Coordinated motions by a converter formed by DNA-disengaged RuvB subunits stimulates ATP hydrolysis and nucleotide exchange. Immobilization of the converter enables RuvB to convert the ATP-contained energy into a lever motion, pulling 2 nucleotides of DNA out of the RuvA tetramer per ATP hydrolyzed, thus driving DNA branch migration. The RuvB motors rotate together with the DNA substrate, which together with the progressing nucleotide cycle form the mechanistic basis for DNA recombination by continuous HJ branch migration. Branch migration allows RuvC to scan DNA until it finds its consensus sequence, where it cleaves and resolves cruciform DNA. The polypeptide is Holliday junction branch migration complex subunit RuvB (Aliivibrio fischeri (strain ATCC 700601 / ES114) (Vibrio fischeri)).